The following is a 194-amino-acid chain: Molybdenum cofactor guanylyltransferase (194 aa).

GTP-binding positions include 12-14 (LAG), Lys25, Asn53, Asp70, and Asp100. Asp100 contacts Mg(2+).

Belongs to the MobA family. Monomer. It depends on Mg(2+) as a cofactor.

Its subcellular location is the cytoplasm. The catalysed reaction is Mo-molybdopterin + GTP + H(+) = Mo-molybdopterin guanine dinucleotide + diphosphate. Transfers a GMP moiety from GTP to Mo-molybdopterin (Mo-MPT) cofactor (Moco or molybdenum cofactor) to form Mo-molybdopterin guanine dinucleotide (Mo-MGD) cofactor. In Aliivibrio fischeri (strain MJ11) (Vibrio fischeri), this protein is Molybdenum cofactor guanylyltransferase.